The primary structure comprises 218 residues: Hypoxanthine-guanine phosphoribosyltransferase (218 aa).

Ala2 is modified (N-acetylalanine). Lys69 is a binding site for GMP. Lys103 carries the N6-acetyllysine modification. Residue Lys115 forms a Glycyl lysine isopeptide (Lys-Gly) (interchain with G-Cter in SUMO1); alternate linkage. Residue Lys115 forms a Glycyl lysine isopeptide (Lys-Gly) (interchain with G-Cter in SUMO2); alternate linkage. GMP contacts are provided by residues Glu134 to Thr142, Lys166, Lys186 to Val188, and Asp194. The Proton acceptor role is filled by Asp138. The residue at position 142 (Thr142) is a Phosphothreonine. Asp194 contacts Mg(2+).

This sequence belongs to the purine/pyrimidine phosphoribosyltransferase family. Homotetramer. It depends on Mg(2+) as a cofactor.

The protein localises to the cytoplasm. It catalyses the reaction IMP + diphosphate = hypoxanthine + 5-phospho-alpha-D-ribose 1-diphosphate. The catalysed reaction is GMP + diphosphate = guanine + 5-phospho-alpha-D-ribose 1-diphosphate. Its pathway is purine metabolism; IMP biosynthesis via salvage pathway; IMP from hypoxanthine: step 1/1. In terms of biological role, converts guanine to guanosine monophosphate, and hypoxanthine to inosine monophosphate. Transfers the 5-phosphoribosyl group from 5-phosphoribosylpyrophosphate onto the purine. Plays a central role in the generation of purine nucleotides through the purine salvage pathway. This Cricetulus griseus (Chinese hamster) protein is Hypoxanthine-guanine phosphoribosyltransferase (HPRT1).